The sequence spans 378 residues: Schlafen family member 2 (378 aa).

Belongs to the Schlafen family. As to expression, mainly expressed in the thymus, lymph node and spleen.

The protein resides in the cytoplasm. Functionally, tRNA-binding protein involved in T-cell mediated immunity. Plays a key role during the metabolic reprograming phase of activated T-cell, when T-cells produce reactive oxygen species (ROS): acts by binding tRNAs and protecting them from cleavage by the oxidative stress-activated ribonuclease angiogenin (ANG). Also required for T-cell quiescence maintenance. This is Schlafen family member 2 from Mus musculus (Mouse).